The sequence spans 142 residues: Large-conductance mechanosensitive channel (142 aa).

3 helical membrane-spanning segments follow: residues 14 to 34 (VMDLAVGVIIGAAFTKIVTSV), 38 to 58 (LVMPIVGAITGGGFDFSNYFL), and 82 to 102 (GSFITVLINFMILAWIIFLLV).

This sequence belongs to the MscL family. In terms of assembly, homopentamer.

The protein resides in the cell inner membrane. In terms of biological role, channel that opens in response to stretch forces in the membrane lipid bilayer. May participate in the regulation of osmotic pressure changes within the cell. This Sinorhizobium fredii (strain NBRC 101917 / NGR234) protein is Large-conductance mechanosensitive channel.